The following is a 401-amino-acid chain: Argininosuccinate synthase (401 aa).

9–17 (AYSGGLDTS) is a binding site for ATP. An L-citrulline-binding site is contributed by Tyr88. Gly118 provides a ligand contact to ATP. The L-aspartate site is built by Thr120, Asn124, and Asp125. Asn124 contributes to the L-citrulline binding site. Arg128, Ser176, Ser185, Glu261, and Tyr273 together coordinate L-citrulline.

It belongs to the argininosuccinate synthase family. Type 1 subfamily. Homotetramer.

It localises to the cytoplasm. It carries out the reaction L-citrulline + L-aspartate + ATP = 2-(N(omega)-L-arginino)succinate + AMP + diphosphate + H(+). It functions in the pathway amino-acid biosynthesis; L-arginine biosynthesis; L-arginine from L-ornithine and carbamoyl phosphate: step 2/3. This Symbiobacterium thermophilum (strain DSM 24528 / JCM 14929 / IAM 14863 / T) protein is Argininosuccinate synthase.